Here is a 430-residue protein sequence, read N- to C-terminus: Ribosomal protein uS12 methylthiotransferase RimO (430 aa).

Residues 1–116 enclose the MTTase N-terminal domain; sequence MRVGIKVLGC…IANAIENGTD (116 aa). Residues cysteine 10, cysteine 46, cysteine 79, cysteine 148, cysteine 152, and cysteine 155 each contribute to the [4Fe-4S] cluster site. The Radical SAM core domain occupies 134 to 365; that stretch reads LEERPYAYVK…LLQAEISNSR (232 aa). Positions 367–430 constitute a TRAM domain; that stretch reads DRFVGKKLKF…DEYDMWGSVI (64 aa).

The protein belongs to the methylthiotransferase family. RimO subfamily. [4Fe-4S] cluster serves as cofactor.

The protein localises to the cytoplasm. The catalysed reaction is L-aspartate(89)-[ribosomal protein uS12]-hydrogen + (sulfur carrier)-SH + AH2 + 2 S-adenosyl-L-methionine = 3-methylsulfanyl-L-aspartate(89)-[ribosomal protein uS12]-hydrogen + (sulfur carrier)-H + 5'-deoxyadenosine + L-methionine + A + S-adenosyl-L-homocysteine + 2 H(+). Functionally, catalyzes the methylthiolation of an aspartic acid residue of ribosomal protein uS12. The protein is Ribosomal protein uS12 methylthiotransferase RimO of Thermotoga petrophila (strain ATCC BAA-488 / DSM 13995 / JCM 10881 / RKU-1).